The primary structure comprises 244 residues: Small ribosomal subunit protein eS4 (244 aa).

Positions 43–108 constitute an S4 RNA-binding domain; it reads LPLLLIVRDI…NYRVLFDRKG (66 aa).

The protein belongs to the eukaryotic ribosomal protein eS4 family.

This is Small ribosomal subunit protein eS4 (rps4e) from Methanocaldococcus jannaschii (strain ATCC 43067 / DSM 2661 / JAL-1 / JCM 10045 / NBRC 100440) (Methanococcus jannaschii).